Reading from the N-terminus, the 172-residue chain is Large ribosomal subunit protein uL10 (172 aa).

This sequence belongs to the universal ribosomal protein uL10 family. In terms of assembly, part of the ribosomal stalk of the 50S ribosomal subunit. The N-terminus interacts with L11 and the large rRNA to form the base of the stalk. The C-terminus forms an elongated spine to which L12 dimers bind in a sequential fashion forming a multimeric L10(L12)X complex.

Forms part of the ribosomal stalk, playing a central role in the interaction of the ribosome with GTP-bound translation factors. In Liberibacter asiaticus (Citrus greening disease), this protein is Large ribosomal subunit protein uL10 (rplJ).